Here is a 59-residue protein sequence, read N- to C-terminus: Temporin-CDYe (59 aa).

Positions 1-22 (MFTLKKSMLLLLFLGTISLTLC) are cleaved as a signal peptide. Positions 23–42 (EEERDANEEEENGGEVKVEE) are excised as a propeptide.

The protein belongs to the frog skin active peptide (FSAP) family. Temporin subfamily. In terms of tissue distribution, expressed by the skin glands.

The protein localises to the secreted. In terms of biological role, antimicrobial peptide. This chain is Temporin-CDYe, found in Rana dybowskii (Dybovsky's frog).